The chain runs to 197 residues: Peptidyl-tRNA hydrolase (197 aa).

Tyr18 is a binding site for tRNA. His23 (proton acceptor) is an active-site residue. Residues Phe69, Asn71, and Asn117 each coordinate tRNA.

Belongs to the PTH family. As to quaternary structure, monomer.

The protein resides in the cytoplasm. The catalysed reaction is an N-acyl-L-alpha-aminoacyl-tRNA + H2O = an N-acyl-L-amino acid + a tRNA + H(+). In terms of biological role, hydrolyzes ribosome-free peptidyl-tRNAs (with 1 or more amino acids incorporated), which drop off the ribosome during protein synthesis, or as a result of ribosome stalling. Catalyzes the release of premature peptidyl moieties from peptidyl-tRNA molecules trapped in stalled 50S ribosomal subunits, and thus maintains levels of free tRNAs and 50S ribosomes. The polypeptide is Peptidyl-tRNA hydrolase (Tolumonas auensis (strain DSM 9187 / NBRC 110442 / TA 4)).